The chain runs to 256 residues: (R)-S-adenosyl-L-methionine hydrolase (256 aa).

The adenosine site is built by D7, H41, D68, and N183. (R)-S-adenosyl-L-methionine-binding residues include N183, Y212, S226, E231, V234, and M236. V234 provides a ligand contact to adenosine.

The protein belongs to the SAM hydrolase / SAM-dependent halogenase family. Homotrimer.

It catalyses the reaction (R)-S-adenosyl-L-methionine + H2O = adenosine + L-methionine + H(+). Its function is as follows. Catalyzes the hydrolysis of S-adenosyl-L-methionine (SAM) into adenosine and L-methionine. Is likely stereoselective, specifically hydrolyzing (R)-S-adenosyl-L-methionine ((R)-SAM), the inactive form of the ubiquitous cofactor SAM, and not the active form of SAM, (S)-S-adenosyl-L-methionine. Probaly plays a role in preventing accumulation of (R)-S-adenosyl-L-methionine in cells; maintenance of (S)-S-denosyl-L-methionine homochirality is important for cellular health given that the (R)-form is largely inactive as a methyl donor and can function as an inhibitor of methyltransferases. Is unable to mediate a fluorination or chlorination reaction with SAM. The sequence is that of (R)-S-adenosyl-L-methionine hydrolase from Pyrococcus horikoshii (strain ATCC 700860 / DSM 12428 / JCM 9974 / NBRC 100139 / OT-3).